Consider the following 377-residue polypeptide: Anhydro-N-acetylmuramic acid kinase (377 aa).

19-26 (GTSLDGVD) is a binding site for ATP.

The protein belongs to the anhydro-N-acetylmuramic acid kinase family.

It carries out the reaction 1,6-anhydro-N-acetyl-beta-muramate + ATP + H2O = N-acetyl-D-muramate 6-phosphate + ADP + H(+). The protein operates within amino-sugar metabolism; 1,6-anhydro-N-acetylmuramate degradation. Its pathway is cell wall biogenesis; peptidoglycan recycling. Its function is as follows. Catalyzes the specific phosphorylation of 1,6-anhydro-N-acetylmuramic acid (anhMurNAc) with the simultaneous cleavage of the 1,6-anhydro ring, generating MurNAc-6-P. Is required for the utilization of anhMurNAc either imported from the medium or derived from its own cell wall murein, and thus plays a role in cell wall recycling. The polypeptide is Anhydro-N-acetylmuramic acid kinase (Roseobacter denitrificans (strain ATCC 33942 / OCh 114) (Erythrobacter sp. (strain OCh 114))).